The primary structure comprises 561 residues: DNA ligase B (561 aa).

The active-site N6-AMP-lysine intermediate is the Lys125.

The protein belongs to the NAD-dependent DNA ligase family. LigB subfamily.

It carries out the reaction NAD(+) + (deoxyribonucleotide)n-3'-hydroxyl + 5'-phospho-(deoxyribonucleotide)m = (deoxyribonucleotide)n+m + AMP + beta-nicotinamide D-nucleotide.. Its function is as follows. Catalyzes the formation of phosphodiester linkages between 5'-phosphoryl and 3'-hydroxyl groups in double-stranded DNA using NAD as a coenzyme and as the energy source for the reaction. In Salmonella gallinarum (strain 287/91 / NCTC 13346), this protein is DNA ligase B.